Here is a 168-residue protein sequence, read N- to C-terminus: MTQEGKIEAILFAAGQAVKIRTLAEALEVTEEEVRELLKRLKEEYVKNHRGIDIVIFEDKVEMCTNDSYGDIVRKALKMEITQGLSQAALEVLAIIAYNQPITKAEIERIRGVRSDKPINTLLEYNLIKESGRASSPGRPILYSTTEDFLKYFGISSLKELPEIEPTS.

It belongs to the ScpB family. Homodimer. Homodimerization may be required to stabilize the binding of ScpA to the Smc head domains. Component of a cohesin-like complex composed of ScpA, ScpB and the Smc homodimer, in which ScpA and ScpB bind to the head domain of Smc. The presence of the three proteins is required for the association of the complex with DNA.

The protein localises to the cytoplasm. Its function is as follows. Participates in chromosomal partition during cell division. May act via the formation of a condensin-like complex containing Smc and ScpA that pull DNA away from mid-cell into both cell halves. In Caldanaerobacter subterraneus subsp. tengcongensis (strain DSM 15242 / JCM 11007 / NBRC 100824 / MB4) (Thermoanaerobacter tengcongensis), this protein is Segregation and condensation protein B.